We begin with the raw amino-acid sequence, 384 residues long: MADKKSPLIAVSVGEASGDLLGAHLIRAIRKRCPQARFTGIGGELMKAEGFESLYDQERLAVRGFVEVVRRLPEILRIRRGLVRDLLSLKPDVFVGIDAPDFNLGVAEKLKRSGIPTVHYVSPSVWAWRRERVGKIVHQVNRVLCLFPMEPQLYLDAGGRAEFVGHPMAQLMPLEDDRETARQTLGVDAGIPVFALLPGSRVSEIDYMAPVFFQTALLLLERYPAARFLLPAATEATKRRLAEVLQRPEFAGLPLTVIDRQSETVCRAADAVLVTSGTATLEVALCKRPMVISYKISPLTYAYVKRKIKVPHVGLPNILLGKEAVPELLQSEAKPEKLAAALADWYEHPDKVAALQQDFRALHLLLKKDTADLAARAVLEEAGC.

This sequence belongs to the LpxB family.

It carries out the reaction a lipid X + a UDP-2-N,3-O-bis[(3R)-3-hydroxyacyl]-alpha-D-glucosamine = a lipid A disaccharide + UDP + H(+). Its pathway is bacterial outer membrane biogenesis; LPS lipid A biosynthesis. Its function is as follows. Condensation of UDP-2,3-diacylglucosamine and 2,3-diacylglucosamine-1-phosphate to form lipid A disaccharide, a precursor of lipid A, a phosphorylated glycolipid that anchors the lipopolysaccharide to the outer membrane of the cell. This is Lipid-A-disaccharide synthase (lpxB) from Neisseria meningitidis serogroup B (strain ATCC BAA-335 / MC58).